The following is a 380-amino-acid chain: 3-isopropylmalate dehydratase large subunit (380 aa).

[4Fe-4S] cluster-binding residues include Cys262, Cys320, and Cys323.

Belongs to the aconitase/IPM isomerase family. LeuC type 2 subfamily. Heterodimer of LeuC and LeuD. Requires [4Fe-4S] cluster as cofactor.

The enzyme catalyses (2R,3S)-3-isopropylmalate = (2S)-2-isopropylmalate. Its pathway is amino-acid biosynthesis; L-leucine biosynthesis; L-leucine from 3-methyl-2-oxobutanoate: step 2/4. Functionally, catalyzes the isomerization between 2-isopropylmalate and 3-isopropylmalate, via the formation of 2-isopropylmaleate. The polypeptide is 3-isopropylmalate dehydratase large subunit (Pyrococcus horikoshii (strain ATCC 700860 / DSM 12428 / JCM 9974 / NBRC 100139 / OT-3)).